The sequence spans 723 residues: Catalase-peroxidase (723 aa).

Positions 96–224 (WHAAGTYRIQ…LAAVQMGLIY (129 aa)) form a cross-link, tryptophyl-tyrosyl-methioninium (Trp-Tyr) (with M-250). The active-site Proton acceptor is the His97. The tryptophyl-tyrosyl-methioninium (Tyr-Met) (with W-96) cross-link spans 224 to 250 (YVNPEGVNSQPDPIKTGEQVRVTFARM). Position 265 (His265) interacts with heme b.

The protein belongs to the peroxidase family. Peroxidase/catalase subfamily. Homodimer or homotetramer. The cofactor is heme b. Post-translationally, formation of the three residue Trp-Tyr-Met cross-link is important for the catalase, but not the peroxidase activity of the enzyme.

The catalysed reaction is H2O2 + AH2 = A + 2 H2O. It catalyses the reaction 2 H2O2 = O2 + 2 H2O. Functionally, bifunctional enzyme with both catalase and broad-spectrum peroxidase activity. This Marinobacter nauticus (strain ATCC 700491 / DSM 11845 / VT8) (Marinobacter aquaeolei) protein is Catalase-peroxidase.